Consider the following 204-residue polypeptide: Methylthioribulose-1-phosphate dehydratase (204 aa).

Zn(2+) contacts are provided by histidine 95 and histidine 97.

Belongs to the aldolase class II family. MtnB subfamily. Requires Zn(2+) as cofactor.

The enzyme catalyses 5-(methylsulfanyl)-D-ribulose 1-phosphate = 5-methylsulfanyl-2,3-dioxopentyl phosphate + H2O. It participates in amino-acid biosynthesis; L-methionine biosynthesis via salvage pathway; L-methionine from S-methyl-5-thio-alpha-D-ribose 1-phosphate: step 2/6. Its function is as follows. Catalyzes the dehydration of methylthioribulose-1-phosphate (MTRu-1-P) into 2,3-diketo-5-methylthiopentyl-1-phosphate (DK-MTP-1-P). This Parvibaculum lavamentivorans (strain DS-1 / DSM 13023 / NCIMB 13966) protein is Methylthioribulose-1-phosphate dehydratase.